Consider the following 208-residue polypeptide: Dephospho-CoA kinase (208 aa).

The DPCK domain occupies 8-208; that stretch reads LVGVTGGIGS…VYQSLLTVVE (201 aa). Residue 16-21 participates in ATP binding; it reads GSGKST.

The protein belongs to the CoaE family.

It is found in the cytoplasm. The enzyme catalyses 3'-dephospho-CoA + ATP = ADP + CoA + H(+). The protein operates within cofactor biosynthesis; coenzyme A biosynthesis; CoA from (R)-pantothenate: step 5/5. Its function is as follows. Catalyzes the phosphorylation of the 3'-hydroxyl group of dephosphocoenzyme A to form coenzyme A. The protein is Dephospho-CoA kinase of Chlorobaculum tepidum (strain ATCC 49652 / DSM 12025 / NBRC 103806 / TLS) (Chlorobium tepidum).